We begin with the raw amino-acid sequence, 404 residues long: Formate-dependent phosphoribosylglycinamide formyltransferase (404 aa).

N(1)-(5-phospho-beta-D-ribosyl)glycinamide is bound by residues 25 to 26 (EL) and Glu-85. ATP is bound by residues Arg-118, Lys-159, 164–169 (SSGKGQ), 199–202 (EGFV), and Glu-207. The ATP-grasp domain occupies 123–318 (RLAAEELGLP…EFELHARAIL (196 aa)). Glu-277 and Glu-289 together coordinate Mg(2+). N(1)-(5-phospho-beta-D-ribosyl)glycinamide contacts are provided by residues Asp-296, Lys-365, and 372-373 (RR).

The protein belongs to the PurK/PurT family. Homodimer.

The catalysed reaction is N(1)-(5-phospho-beta-D-ribosyl)glycinamide + formate + ATP = N(2)-formyl-N(1)-(5-phospho-beta-D-ribosyl)glycinamide + ADP + phosphate + H(+). It participates in purine metabolism; IMP biosynthesis via de novo pathway; N(2)-formyl-N(1)-(5-phospho-D-ribosyl)glycinamide from N(1)-(5-phospho-D-ribosyl)glycinamide (formate route): step 1/1. Functionally, involved in the de novo purine biosynthesis. Catalyzes the transfer of formate to 5-phospho-ribosyl-glycinamide (GAR), producing 5-phospho-ribosyl-N-formylglycinamide (FGAR). Formate is provided by PurU via hydrolysis of 10-formyl-tetrahydrofolate. The polypeptide is Formate-dependent phosphoribosylglycinamide formyltransferase (Burkholderia cenocepacia (strain HI2424)).